A 481-amino-acid chain; its full sequence is Coniferyl aldehyde dehydrogenase (481 aa).

Active-site residues include glutamate 221 and cysteine 255.

This sequence belongs to the aldehyde dehydrogenase family. In terms of assembly, homodimer.

The enzyme catalyses (E)-coniferaldehyde + NADP(+) + H2O = (E)-ferulate + NADPH + 2 H(+). The catalysed reaction is (E)-coniferaldehyde + NAD(+) + H2O = (E)-ferulate + NADH + 2 H(+). Its function is as follows. Catalyzes the NAD(+)-dependent oxidation of coniferyl aldehyde to ferulic acid and which is induced during growth with eugenol as the carbon source. In Pseudomonas sp. (strain HR199 / DSM 7063), this protein is Coniferyl aldehyde dehydrogenase (calB).